A 330-amino-acid chain; its full sequence is Ribosome production factor 1 (330 aa).

Disordered regions lie at residues 1–32 (MKAVKAPVEEMDQAECEVKEEKSASGPCFPPT) and 53–83 (EEKRKKRMELKKKKKKERKALDDKAPPKEVP). Positions 55 to 70 (KRKKRMELKKKKKKER) are enriched in basic residues. Residues 71-83 (KALDDKAPPKEVP) are compositionally biased toward basic and acidic residues. In terms of domain architecture, Brix spans 123-306 (PKVLITTSDR…LRSLQKGTFD (184 aa)). Residues 284–301 (VGIQELGPRFTLKLRSLQ) are RNA-binding.

The protein localises to the nucleus. It localises to the nucleolus. May be required for ribosome biogenesis. This is Ribosome production factor 1 (rpf1) from Danio rerio (Zebrafish).